A 156-amino-acid polypeptide reads, in one-letter code: Transcription elongation factor GreA (156 aa).

Residues 46–66 (AEYHSAREKQSFIEGRIKELE) are a coiled coil.

Belongs to the GreA/GreB family.

Necessary for efficient RNA polymerase transcription elongation past template-encoded arresting sites. The arresting sites in DNA have the property of trapping a certain fraction of elongating RNA polymerases that pass through, resulting in locked ternary complexes. Cleavage of the nascent transcript by cleavage factors such as GreA or GreB allows the resumption of elongation from the new 3'terminus. GreA releases sequences of 2 to 3 nucleotides. The sequence is that of Transcription elongation factor GreA from Ruegeria pomeroyi (strain ATCC 700808 / DSM 15171 / DSS-3) (Silicibacter pomeroyi).